Consider the following 642-residue polypeptide: Envelope glycoprotein (642 aa).

The N-terminal stretch at 1–34 is a signal peptide; sequence MESPTHPKPSKDKTLSWNLAFLVGILFTIDIGMA. Residues 35 to 586 are Extracellular-facing; the sequence is NPSPHQIYNV…FNKSPWFTTL (552 aa). N-linked (GlcNAc...) asparagine; by host glycosylation is found at N43 and N58. 2 disulfide bridges follow: C125–C147 and C139–C152. A disordered region spans residues 233-283; the sequence is PPQAMGPNLVLPDQKPPSRQSQTGSKVATQRPQTNESAPRSVAPTTMGPKR. Residues 249–270 show a composition bias toward polar residues; that stretch reads PSRQSQTGSKVATQRPQTNESA. 3 N-linked (GlcNAc...) asparagine; by host glycosylation sites follow: N267, N302, and N307. Cystine bridges form between C312-C315, C312-C539, and C531-C538. Residues 312–315 carry the CXXC motif; it reads CWLC. N-linked (GlcNAc...) asparagine; by host glycans are attached at residues N334, N374, N390, and N410. The interval 448–468 is fusion peptide; the sequence is ISLTVALMLGGLTVGGIAAGV. Coiled coils occupy residues 476–525 and 535–571; these read LETA…ILFL and KEEC…SQQG. Positions 514 to 530 are immunosuppression; it reads LQNRRGLDILFLQEGGL. The CX6CC motif lies at 531–539; sequence CAALKEECC. A helical transmembrane segment spans residues 587–607; sequence ISSIMGPLLILLLILLFGPCI. A lipid anchor (S-palmitoyl cysteine; by host) is attached at C606. The Cytoplasmic portion of the chain corresponds to 608 to 642; sequence LNRLVQFVKDRISVVQALILTQQYQQIKQYDPDRP.

The mature envelope protein (Env) consists of a trimer of SU-TM heterodimers attached by a labile interchain disulfide bond. Specific enzymatic cleavages in vivo yield mature proteins. Envelope glycoproteins are synthesized as an inactive precursor that is N-glycosylated and processed likely by host cell furin or by a furin-like protease in the Golgi to yield the mature SU and TM proteins. The cleavage site between SU and TM requires the minimal sequence [KR]-X-[KR]-R. The R-peptide is released from the C-terminus of the cytoplasmic tail of the TM protein upon particle formation as a result of proteolytic cleavage by the viral protease. Cleavage of this peptide is required for TM to become fusogenic. In terms of processing, the CXXC motif is highly conserved across a broad range of retroviral envelope proteins. It is thought to participate in the formation of a labile disulfide bond possibly with the CX6CC motif present in the transmembrane protein. Isomerization of the intersubunit disulfide bond to an SU intrachain disulfide bond is thought to occur upon receptor recognition in order to allow membrane fusion. Post-translationally, the transmembrane protein is palmitoylated. The R-peptide is palmitoylated.

It is found in the virion membrane. The protein localises to the host cell membrane. The surface protein (SU) attaches the virus to the host cell by binding to its receptor. This interaction triggers the refolding of the transmembrane protein (TM) and is thought to activate its fusogenic potential by unmasking its fusion peptide. Fusion occurs at the host cell plasma membrane. Its function is as follows. The transmembrane protein (TM) acts as a class I viral fusion protein. Under the current model, the protein has at least 3 conformational states: pre-fusion native state, pre-hairpin intermediate state, and post-fusion hairpin state. During viral and target cell membrane fusion, the coiled coil regions (heptad repeats) assume a trimer-of-hairpins structure, positioning the fusion peptide in close proximity to the C-terminal region of the ectodomain. The formation of this structure appears to drive apposition and subsequent fusion of viral and target cell membranes. Membranes fusion leads to delivery of the nucleocapsid into the cytoplasm. This Felidae (cat family) protein is Envelope glycoprotein (env).